The primary structure comprises 493 residues: Intermediate cleaving peptidase 55, mitochondrial (493 aa).

Residues 1-19 (MQFLARNLVRRVSRTQVVS) constitute a mitochondrion transit peptide. Asp296, Asp307, His383, Glu410, and Glu433 together coordinate Mn(2+).

This sequence belongs to the peptidase M24B family. The cofactor is Mn(2+).

Its subcellular location is the mitochondrion. The protein resides in the nucleus. Aminopeptidase which cleaves preprotein intermediates that carry destabilizing N-ter amino acid residues after the mitochondrial processing peptidase (MPP) cleavage site and is thus critical for stabilization of the mitochondrial proteome. This chain is Intermediate cleaving peptidase 55, mitochondrial, found in Arabidopsis thaliana (Mouse-ear cress).